The primary structure comprises 426 residues: Adenylosuccinate synthetase (426 aa).

GTP-binding positions include 12–18 (GDEGKGK) and 40–42 (GHT). Asp-13 acts as the Proton acceptor in catalysis. Residues Asp-13 and Gly-40 each contribute to the Mg(2+) site. IMP contacts are provided by residues 13–16 (DEGK), 38–41 (NAGH), Thr-131, Arg-145, Gln-226, Thr-241, and Arg-305. The active-site Proton donor is the His-41. 301–307 (ATTGRKR) is a binding site for substrate. GTP-binding positions include Arg-307, 333-335 (KLD), and 415-417 (SVG).

It belongs to the adenylosuccinate synthetase family. As to quaternary structure, homodimer. The cofactor is Mg(2+).

Its subcellular location is the cytoplasm. The catalysed reaction is IMP + L-aspartate + GTP = N(6)-(1,2-dicarboxyethyl)-AMP + GDP + phosphate + 2 H(+). The protein operates within purine metabolism; AMP biosynthesis via de novo pathway; AMP from IMP: step 1/2. Its function is as follows. Plays an important role in the de novo pathway of purine nucleotide biosynthesis. Catalyzes the first committed step in the biosynthesis of AMP from IMP. The chain is Adenylosuccinate synthetase from Nitratidesulfovibrio vulgaris (strain ATCC 29579 / DSM 644 / CCUG 34227 / NCIMB 8303 / VKM B-1760 / Hildenborough) (Desulfovibrio vulgaris).